Here is a 638-residue protein sequence, read N- to C-terminus: Acetolactate synthase 2, chloroplastic (638 aa).

A chloroplast-targeting transit peptide spans 1–39 (MATAATAAAALTGATTATPKSRRRAHHLATRRALAAPIR). Residues 44–67 (SRATPTAPPATPLRPWGPNEPRKG) form a disordered region. Glutamate 112 serves as a coordination point for thiamine diphosphate. Residues cysteine 132 and cysteine 278 are joined by a disulfide bond. FAD contacts are provided by residues arginine 214, 320–341 (HGTVYANYAVDKADLLLAFGVR), and 363–382 (DIDPAEIGKNKQPHVSICAD). A thiamine pyrophosphate binding region spans residues 455-535 (QHQMWAAQYY…VKVFVLNNQH (81 aa)). Positions 506 and 533 each coordinate Mg(2+).

This sequence belongs to the TPP enzyme family. Requires Mg(2+) as cofactor. Thiamine diphosphate is required as a cofactor.

The protein localises to the plastid. It is found in the chloroplast. It carries out the reaction 2 pyruvate + H(+) = (2S)-2-acetolactate + CO2. The protein operates within amino-acid biosynthesis; L-isoleucine biosynthesis; L-isoleucine from 2-oxobutanoate: step 1/4. Its pathway is amino-acid biosynthesis; L-valine biosynthesis; L-valine from pyruvate: step 1/4. The chain is Acetolactate synthase 2, chloroplastic (ALS2) from Zea mays (Maize).